The following is a 299-amino-acid chain: Tyrosine recombinase XerD (299 aa).

Residues 3 to 88 (QQDNPLIEQF…AMRRLFQYLY (86 aa)) form the Core-binding (CB) domain. The Tyr recombinase domain occupies 109–293 (RLPKDLSEAQ…ATERLRQLHQ (185 aa)). Catalysis depends on residues Arg-149, Lys-173, His-245, Arg-248, and His-271. Tyr-280 serves as the catalytic O-(3'-phospho-DNA)-tyrosine intermediate.

Belongs to the 'phage' integrase family. XerD subfamily. As to quaternary structure, forms a cyclic heterotetrameric complex composed of two molecules of XerC and two molecules of XerD, in which XerC interacts with XerD via its C-terminal region, XerD interacts with XerC via its C-terminal region and so on.

It localises to the cytoplasm. FtsK may regulate the catalytic switch between XerC and XerD in the heterotetrameric complex during the two steps of the recombination process. Site-specific tyrosine recombinase, which acts by catalyzing the cutting and rejoining of the recombining DNA molecules. Binds cooperatively to specific DNA consensus sequences that are separated from XerC binding sites by a short central region, forming the heterotetrameric XerC-XerD complex that recombines DNA substrates. The complex is essential to convert dimers of the bacterial chromosome into monomers to permit their segregation at cell division. It also contributes to the segregational stability of plasmids. In the complex XerD specifically exchanges the bottom DNA strands. The polypeptide is Tyrosine recombinase XerD (Yersinia pestis).